We begin with the raw amino-acid sequence, 262 residues long: MSWSDKRRHWRARKSQVNWYLWSGIGFLSLVIGSFVFGGYLLHKFLNDASTLPIEAVAIKGERTYTTDKDIQIALQDLMQRSFFSADITLVQQALEALPWVYRASVRREWPAKLRVYLQEQQPAAHWNGTAWLNVHGEVFEAPSHPELEHLPHLSGPDDMGTEVLTAYAQVNSLLKINGFTLASLNLTPRHAWHATLGNGIVLDLGREDKMARIQRFITVYPLLAKQDKPIARVDLRYDTGLAVGWGDAQTREPIINDEKPR.

At 1 to 20 the chain is on the cytoplasmic side; sequence MSWSDKRRHWRARKSQVNWY. Residues 21-41 traverse the membrane as a helical segment; that stretch reads LWSGIGFLSLVIGSFVFGGYL. Topologically, residues 42–262 are periplasmic; it reads LHKFLNDAST…EPIINDEKPR (221 aa). Positions 52–121 constitute a POTRA domain; the sequence is LPIEAVAIKG…AKLRVYLQEQ (70 aa).

It belongs to the FtsQ/DivIB family. FtsQ subfamily. In terms of assembly, part of a complex composed of FtsB, FtsL and FtsQ.

Its subcellular location is the cell inner membrane. Its function is as follows. Essential cell division protein. May link together the upstream cell division proteins, which are predominantly cytoplasmic, with the downstream cell division proteins, which are predominantly periplasmic. May control correct divisome assembly. This is Cell division protein FtsQ from Shewanella oneidensis (strain ATCC 700550 / JCM 31522 / CIP 106686 / LMG 19005 / NCIMB 14063 / MR-1).